The sequence spans 318 residues: Ribose-phosphate pyrophosphokinase 2 (318 aa).

Residue 96 to 101 participates in ATP binding; it reads RQDKKD. D128, H130, D139, and D143 together coordinate Mg(2+). ATP is bound at residue H130. Positions 212-227 are binding of phosphoribosylpyrophosphate; sequence KDRVAILVDDMADTCG.

Belongs to the ribose-phosphate pyrophosphokinase family. As to quaternary structure, homodimer. The active form is probably a hexamer composed of 3 homodimers. It depends on Mg(2+) as a cofactor.

It catalyses the reaction D-ribose 5-phosphate + ATP = 5-phospho-alpha-D-ribose 1-diphosphate + AMP + H(+). It participates in metabolic intermediate biosynthesis; 5-phospho-alpha-D-ribose 1-diphosphate biosynthesis; 5-phospho-alpha-D-ribose 1-diphosphate from D-ribose 5-phosphate (route I): step 1/1. Activated by magnesium and inorganic phosphate. Competitively or non-competitively inhibited by ADP, 2,3-bisphosphoglyceride or GDP. Catalyzes the synthesis of phosphoribosylpyrophosphate (PRPP) that is essential for nucleotide synthesis. The chain is Ribose-phosphate pyrophosphokinase 2 (PRPS2) from Homo sapiens (Human).